The sequence spans 38 residues: Large ribosomal subunit protein bL36 (38 aa).

The protein belongs to the bacterial ribosomal protein bL36 family.

The polypeptide is Large ribosomal subunit protein bL36 (Prochlorococcus marinus (strain SARG / CCMP1375 / SS120)).